The sequence spans 346 residues: 3-keto-steroid reductase ERG27 (346 aa).

NADP(+) is bound by residues Leu19, Thr42, and Lys48. Residues Ser182 and Tyr205 each act as proton donor in the active site. The NADP(+) site is built by Tyr205, Lys209, and Ser241. Lys209 functions as the Lowers pKa of active site Tyr in the catalytic mechanism. Residues 242 to 262 form a helical membrane-spanning segment; sequence FSFFQYLNVFTYYGMLFLFYL. Asn272 carries an N-linked (GlcNAc...) asparagine glycan.

It belongs to the short-chain dehydrogenases/reductases (SDR) family. ERG27 subfamily. In terms of assembly, heterotetramer of ERG25, ERG26, ERG27 and ERG28. ERG28 acts as a scaffold to tether ERG27 and other 4,4-demethylation-related enzymes, forming a demethylation enzyme complex, in the endoplasmic reticulum. Interacts with ERG25 and ERG28. Also interacts with ERG7, but only in lipid particles.

The protein localises to the endoplasmic reticulum membrane. It localises to the lipid droplet. The catalysed reaction is 3-dehydro-4alpha-methylzymosterol + NADPH + H(+) = 4alpha-methylzymosterol + NADP(+). It functions in the pathway steroid biosynthesis; zymosterol biosynthesis; zymosterol from lanosterol: step 5/6. 3-keto-steroid reductase; part of the third module of ergosterol biosynthesis pathway that includes the late steps of the pathway. ERG27 is a catalytic component of the C-4 demethylation complex that catalyzes the reduction of the keto group on the C-3. The third module or late pathway involves the ergosterol synthesis itself through consecutive reactions that mainly occur in the endoplasmic reticulum (ER) membrane. Firstly, the squalene synthase ERG9 catalyzes the condensation of 2 farnesyl pyrophosphate moieties to form squalene, which is the precursor of all steroids. Squalene synthase is crucial for balancing the incorporation of farnesyl diphosphate (FPP) into sterol and nonsterol isoprene synthesis. Secondly, the squalene epoxidase ERG1 catalyzes the stereospecific oxidation of squalene to (S)-2,3-epoxysqualene, which is considered to be a rate-limiting enzyme in steroid biosynthesis. Then, the lanosterol synthase ERG7 catalyzes the cyclization of (S)-2,3 oxidosqualene to lanosterol, a reaction that forms the sterol core. In the next steps, lanosterol is transformed to zymosterol through a complex process involving various demethylation, reduction and desaturation reactions. The lanosterol 14-alpha-demethylase ERG11 (also known as CYP51) catalyzes C14-demethylation of lanosterol to produce 4,4'-dimethyl cholesta-8,14,24-triene-3-beta-ol, which is critical for ergosterol biosynthesis. The C-14 reductase ERG24 reduces the C14=C15 double bond of 4,4-dimethyl-cholesta-8,14,24-trienol to produce 4,4-dimethyl-cholesta-8,24-dienol. 4,4-dimethyl-cholesta-8,24-dienol is substrate of the C-4 demethylation complex ERG25-ERG26-ERG27 in which ERG25 catalyzes the three-step monooxygenation required for the demethylation of 4,4-dimethyl and 4alpha-methylsterols, ERG26 catalyzes the oxidative decarboxylation that results in a reduction of the 3-beta-hydroxy group at the C-3 carbon to an oxo group, and ERG27 is responsible for the reduction of the keto group on the C-3. ERG28 has a role as a scaffold to help anchor ERG25, ERG26 and ERG27 to the endoplasmic reticulum and ERG29 regulates the activity of the iron-containing C4-methylsterol oxidase ERG25. Then, the sterol 24-C-methyltransferase ERG6 catalyzes the methyl transfer from S-adenosyl-methionine to the C-24 of zymosterol to form fecosterol. The C-8 sterol isomerase ERG2 catalyzes the reaction which results in unsaturation at C-7 in the B ring of sterols and thus converts fecosterol to episterol. The sterol-C5-desaturase ERG3 then catalyzes the introduction of a C-5 double bond in the B ring to produce 5-dehydroepisterol. The C-22 sterol desaturase ERG5 further converts 5-dehydroepisterol into ergosta-5,7,22,24(28)-tetraen-3beta-ol by forming the C-22(23) double bond in the sterol side chain. Finally, ergosta-5,7,22,24(28)-tetraen-3beta-ol is substrate of the C-24(28) sterol reductase ERG4 to produce ergosterol. In terms of biological role, facilitates the association of ERG7 with lipid particles preventing its digestion in the endoplasmic reticulum and the lipid particles. In Candida albicans (Yeast), this protein is 3-keto-steroid reductase ERG27.